The sequence spans 399 residues: uncharacterized protein (399 aa).

5 helical membrane passes run 26–46, 266–286, 301–321, 324–344, and 358–378; these read LLTIIGIVIGVLAMVSLISLG, VITIFVVGVAAISLLVGAVGI, IGILKALGAETTDILAIFVVE, FLGLFGGIVGLVLGILLAEVI, and AWISWELIVGVLIFSFLVGVI.

Belongs to the ABC-4 integral membrane protein family.

Its subcellular location is the cell membrane. This is an uncharacterized protein from Methanocaldococcus jannaschii (strain ATCC 43067 / DSM 2661 / JAL-1 / JCM 10045 / NBRC 100440) (Methanococcus jannaschii).